The chain runs to 953 residues: Isoleucine--tRNA ligase (953 aa).

A 'HIGH' region motif is present at residues 58-68 (PYANGSIHIGH). E577 provides a ligand contact to L-isoleucyl-5'-AMP. The 'KMSKS' region signature appears at 618 to 622 (KMSKS). Position 621 (K621) interacts with ATP. C916, C919, C936, and C939 together coordinate Zn(2+).

This sequence belongs to the class-I aminoacyl-tRNA synthetase family. IleS type 1 subfamily. Monomer. The cofactor is Zn(2+).

Its subcellular location is the cytoplasm. It carries out the reaction tRNA(Ile) + L-isoleucine + ATP = L-isoleucyl-tRNA(Ile) + AMP + diphosphate. In terms of biological role, catalyzes the attachment of isoleucine to tRNA(Ile). As IleRS can inadvertently accommodate and process structurally similar amino acids such as valine, to avoid such errors it has two additional distinct tRNA(Ile)-dependent editing activities. One activity is designated as 'pretransfer' editing and involves the hydrolysis of activated Val-AMP. The other activity is designated 'posttransfer' editing and involves deacylation of mischarged Val-tRNA(Ile). This is Isoleucine--tRNA ligase from Aeromonas hydrophila subsp. hydrophila (strain ATCC 7966 / DSM 30187 / BCRC 13018 / CCUG 14551 / JCM 1027 / KCTC 2358 / NCIMB 9240 / NCTC 8049).